A 422-amino-acid polypeptide reads, in one-letter code: Serine--tRNA ligase (422 aa).

Positions 1–20 (MHDLKSIRDNPDGFDAGLKR) are disordered. L-serine is bound at residue 229-231 (TAE). An ATP-binding site is contributed by 260-262 (RSE). Position 283 (glutamate 283) interacts with L-serine. 347-350 (EISS) contacts ATP. Serine 383 is an L-serine binding site.

This sequence belongs to the class-II aminoacyl-tRNA synthetase family. Type-1 seryl-tRNA synthetase subfamily. Homodimer. The tRNA molecule binds across the dimer.

The protein localises to the cytoplasm. The catalysed reaction is tRNA(Ser) + L-serine + ATP = L-seryl-tRNA(Ser) + AMP + diphosphate + H(+). It catalyses the reaction tRNA(Sec) + L-serine + ATP = L-seryl-tRNA(Sec) + AMP + diphosphate + H(+). The protein operates within aminoacyl-tRNA biosynthesis; selenocysteinyl-tRNA(Sec) biosynthesis; L-seryl-tRNA(Sec) from L-serine and tRNA(Sec): step 1/1. Its function is as follows. Catalyzes the attachment of serine to tRNA(Ser). Is also able to aminoacylate tRNA(Sec) with serine, to form the misacylated tRNA L-seryl-tRNA(Sec), which will be further converted into selenocysteinyl-tRNA(Sec). In Paramagnetospirillum magneticum (strain ATCC 700264 / AMB-1) (Magnetospirillum magneticum), this protein is Serine--tRNA ligase.